We begin with the raw amino-acid sequence, 78 residues long: Small ribosomal subunit protein bS18 (78 aa).

This sequence belongs to the bacterial ribosomal protein bS18 family. As to quaternary structure, part of the 30S ribosomal subunit. Forms a tight heterodimer with protein bS6.

Its function is as follows. Binds as a heterodimer with protein bS6 to the central domain of the 16S rRNA, where it helps stabilize the platform of the 30S subunit. This chain is Small ribosomal subunit protein bS18, found in Lactobacillus delbrueckii subsp. bulgaricus (strain ATCC 11842 / DSM 20081 / BCRC 10696 / JCM 1002 / NBRC 13953 / NCIMB 11778 / NCTC 12712 / WDCM 00102 / Lb 14).